Consider the following 150-residue polypeptide: UPF0178 protein Sbal223_2514 (150 aa).

The protein belongs to the UPF0178 family.

This Shewanella baltica (strain OS223) protein is UPF0178 protein Sbal223_2514.